The sequence spans 62 residues: MLILTRKVGESINIGDEITVTILGVQGLQVRLGINAPKNVSVHREEIYKRIQAELAPNQDPQ.

Belongs to the CsrA/RsmA family. Homodimer; the beta-strands of each monomer intercalate to form a hydrophobic core, while the alpha-helices form wings that extend away from the core.

The protein localises to the cytoplasm. In terms of biological role, a key translational regulator that binds mRNA to regulate translation initiation and/or mRNA stability. Mediates global changes in gene expression, shifting from rapid growth to stress survival by linking envelope stress, the stringent response and the catabolite repression systems. Usually binds in the 5'-UTR; binding at or near the Shine-Dalgarno sequence prevents ribosome-binding, repressing translation, binding elsewhere in the 5'-UTR can activate translation and/or stabilize the mRNA. Its function is antagonized by small RNA(s). The protein is Translational regulator CsrA 3 of Pseudomonas syringae pv. tomato (strain ATCC BAA-871 / DC3000).